We begin with the raw amino-acid sequence, 824 residues long: MRQSLLFLTSVVPFVLAPRPPDDPGFGPHQRLEKLDSLLSDYDILSLSNIQQHSVRKRDLQTSTHVETLLTFSALKRHFKLYLTSSTERFSQNFKVVVVDGKNESEYTVKWQDFFTGHVVGEPDSRVLAHIRDDDVIIRINTDGAEYNIEPLWRFVNDTKDKRMLVYKSEDIKNVSRLQSPKVCGYLKVDNEELLPKGLVDREPPEELVHRVKRRADPDPMKNTCKLLVVADHRFYRYMGRGEESTTTNYLIELIDRVDDIYRNTSWDNAGFKGYGIQIEQIRILKSPQEVKPGEKHYNMAKSYPNEEKDAWDVKMLLEQFSFDIAEEASKVCLAHLFTYQDFDMGTLGLAYVGSPRANSHGGVCPKAYYSPVGKKNIYLNSGLTSTKNYGKTILTKEADLVTTHELGHNFGAEHDPDGLAECAPNEDQGGKYVMYPIAVSGDHENNKMFSNCSKQSIYKTIESKAQECFQERSNKVCGNSRVDEGEECDPGIMYLNNDTCCNSDCTLKEGVQCSDRNSPCCKNCQFETAQKKCQEAINATCKGVSYCTGNSSECPPPGNAEDDTVCLDLGKCKDGKCIPFCEREQQLESCACNETDNSCKVCCRDLSGRCVPYVDAEQKNLFLRKGKPCTVGFCDMNGKCEKRVQDVIERFWDFIDQLSINTFGKFLADNIVGSVLVFSLIFWIPFSILVHCVDKKLDKQYESLSLFHPSNVEMLSSMDSASVRIIKPFPAPQTPGRLQPAPVIPSAPAAPKLDHQRMDTIQEDPSTDSHMDEDGFEKDPFPNSSTAAKSFEDLTDHPVTRSEKAASFKLQRQNRVDSKETEC.

The N-terminal stretch at Met1–Ala17 is a signal peptide. Positions Pro18 to Arg214 are excised as a propeptide. Residues Asn103, Asn157, and Asn174 are each glycosylated (N-linked (GlcNAc...) asparagine). The Cysteine switch signature appears at Lys182–Val189. Cys184 is a binding site for Zn(2+). Residues Arg215–Asn671 are Extracellular-facing. Residues Asn223 to Ser474 form the Peptidase M12B domain. Disulfide bonds link Cys225–Cys333, Cys365–Cys469, and Cys423–Cys453. Asn264 carries an N-linked (GlcNAc...) asparagine glycan. His405 is a binding site for Zn(2+). Residue Glu406 is part of the active site. Residues His409 and His415 each contribute to the Zn(2+) site. 4 N-linked (GlcNAc...) asparagine glycosylation sites follow: Asn452, Asn498, Asn539, and Asn551. Residues Asn475–Asp563 form the Disintegrin domain. Cystine bridges form between Cys534–Cys555, Cys573–Cys582, Cys578–Cys591, and Cys593–Cys600. A glycan (N-linked (GlcNAc...) asparagine) is linked at Asn594. Residues Cys603–Asn671 form a crambin-like region. A helical membrane pass occupies residues Ile672–His692. The Cytoplasmic segment spans residues Cys693–Cys824. 2 consecutive short sequence motifs (SH3-binding) follow at residues Pro731 to Arg738 and Pro741 to Ala748. The interval Ala732–Cys824 is disordered. Phosphothreonine; by MAPK14 is present on Thr735. The segment covering Pro741 to Pro752 has biased composition (low complexity). At Thr761 the chain carries Phosphothreonine. Ser767 is subject to Phosphoserine. 3 stretches are compositionally biased toward basic and acidic residues: residues Thr768–Pro781, Ser791–Ala807, and Asn815–Cys824. Residues Ser791 and Ser819 each carry the phosphoserine modification.

In terms of assembly, interacts with MAD2L1, MAPK14 and MUC1. Interacts with iRhom1/RHBDF1 and iRhom2/RHBDF2. Interacts with FRMD8 via its interaction with iRhom1/RHBDF1 and iRhom2/RHBDF2. Interacts with TSPAN8. Zn(2+) is required as a cofactor. In terms of processing, the precursor is cleaved by a furin endopeptidase. Phosphorylated. Stimulation by growth factor or phorbol 12-myristate 13-acetate induces phosphorylation of Ser-819 but decreases phosphorylation of Ser-791. Phosphorylation at Thr-735 by MAPK14 is required for ADAM17-mediated ectodomain shedding. As to expression, ubiquitously expressed. Expressed at highest levels in adult heart, placenta, skeletal muscle, pancreas, spleen, thymus, prostate, testes, ovary and small intestine, and in fetal brain, lung, liver and kidney. Expressed in natural killer cells (at protein level).

The protein localises to the cell membrane. The enzyme catalyses Narrow endopeptidase specificity. Cleaves Pro-Leu-Ala-Gln-Ala-|-Val-Arg-Ser-Ser-Ser in the membrane-bound, 26-kDa form of tumor necrosis factor alpha (TNFalpha). Similarly cleaves other membrane-anchored, cell-surface proteins to 'shed' the extracellular domains.. Transmembrane metalloprotease which mediates the ectodomain shedding of a myriad of transmembrane proteins including adhesion proteins, growth factor precursors and cytokines important for inflammation and immunity. Cleaves the membrane-bound precursor of TNF-alpha to its mature soluble form. Responsible for the proteolytical release of soluble JAM3 from endothelial cells surface. Responsible for the proteolytic release of several other cell-surface proteins, including p75 TNF-receptor, interleukin 1 receptor type II, p55 TNF-receptor, transforming growth factor-alpha, L-selectin, growth hormone receptor, MUC1 and the amyloid precursor protein. Acts as an activator of Notch pathway by mediating cleavage of Notch, generating the membrane-associated intermediate fragment called Notch extracellular truncation (NEXT). Plays a role in the proteolytic processing of ACE2. Plays a role in hemostasis through shedding of GP1BA, the platelet glycoprotein Ib alpha chain. Mediates the proteolytic cleavage of LAG3, leading to release the secreted form of LAG3. Mediates the proteolytic cleavage of IL6R, leading to the release of secreted form of IL6R. Mediates the proteolytic cleavage and shedding of FCGR3A upon NK cell stimulation, a mechanism that allows for increased NK cell motility and detachment from opsonized target cells. Cleaves TREM2, resulting in shedding of the TREM2 ectodomain. The sequence is that of Disintegrin and metalloproteinase domain-containing protein 17 from Homo sapiens (Human).